Consider the following 340-residue polypeptide: Nuclear transcription factor Y subunit A-3 (340 aa).

A disordered region spans residues 43 to 116 (SLSLKVDSRP…KGFASNPKQG (74 aa)). Low complexity predominate over residues 60-77 (QISFQDQDSSSTQSTGQS). A compositionally biased stretch (polar residues) spans 78–103 (YTEVASSGDDNPSRQISFSAKSGSEI). The short motif at 182-205 (FVNAKQYHAIMRRRQQRAKLEAQN) is the Subunit association domain (SAD) element. The segment at residues 212–237 (KPYLHESRHVHALKRPRGSGGRFLNT) is a DNA-binding region (NFYA/HAP2-type).

Belongs to the NFYA/HAP2 subunit family. Heterotrimeric transcription factor composed of three components, NF-YA, NF-YB and NF-YC. NF-YB and NF-YC must interact and dimerize for NF-YA association and DNA binding. In terms of tissue distribution, ubiquitous.

Its subcellular location is the nucleus. Stimulates the transcription of various genes by recognizing and binding to a CCAAT motif in promoters. This Arabidopsis thaliana (Mouse-ear cress) protein is Nuclear transcription factor Y subunit A-3 (NFYA3).